The primary structure comprises 426 residues: Gamma-glutamyl phosphate reductase (426 aa).

The protein belongs to the gamma-glutamyl phosphate reductase family.

The protein resides in the cytoplasm. The catalysed reaction is L-glutamate 5-semialdehyde + phosphate + NADP(+) = L-glutamyl 5-phosphate + NADPH + H(+). It participates in amino-acid biosynthesis; L-proline biosynthesis; L-glutamate 5-semialdehyde from L-glutamate: step 2/2. Catalyzes the NADPH-dependent reduction of L-glutamate 5-phosphate into L-glutamate 5-semialdehyde and phosphate. The product spontaneously undergoes cyclization to form 1-pyrroline-5-carboxylate. This chain is Gamma-glutamyl phosphate reductase, found in Ralstonia pickettii (strain 12J).